A 314-amino-acid chain; its full sequence is Deoxymugineic acid synthase 1-A (314 aa).

Residues 1–21 (MGAGDKTAAGMPRIGMGTAVQ) form a disordered region. Asp-44 is a binding site for NADP(+). Residue Tyr-49 is the Proton donor of the active site. A substrate-binding site is contributed by His-112. Residues 158–159 (AN), Gln-180, 258–266 (FDEARMREN), and 273–281 (ELTEEEHRR) contribute to the NADP(+) site.

The protein belongs to the aldo/keto reductase family. In terms of tissue distribution, mostly expressed in root tissues, observed in mesocotyl and embryonic roots, seedling roots, crown and seedling leafes, mature bracts, anthers, pistil, caryopsis and embryos.

It carries out the reaction 2'-deoxymugineate + NAD(+) = 3''-deamino-3''-oxonicotianamine + NADH + H(+). The catalysed reaction is 2'-deoxymugineate + NADP(+) = 3''-deamino-3''-oxonicotianamine + NADPH + H(+). The protein operates within siderophore biosynthesis. In terms of biological role, catalyzes the reduction of a 3''-keto intermediate during the biosynthesis of 2'-deoxymugineic acid (DMA) from L-Met. Involved in the formation of phytosiderophores (MAs) belonging to the mugineic acid family and required to acquire iron. In Triticum aestivum (Wheat), this protein is Deoxymugineic acid synthase 1-A.